Consider the following 959-residue polypeptide: DNA translocase FtsK 1 (959 aa).

3 helical membrane-spanning segments follow: residues 1-21 (MGLG…WRYV), 39-59 (IWLA…LTSG), and 83-103 (GWTG…PMVF). Residues 104 to 959 (GHSWRQLLAR…REVIAPGGGD (856 aa)) lie on the Cytoplasmic side of the membrane. Residues 122–427 (PVQADARHDE…AAPPPPAVPA (306 aa)) form a disordered region. Residues 126 to 136 (DARHDEADDGL) are compositionally biased toward basic and acidic residues. 2 stretches are compositionally biased toward low complexity: residues 220–229 (ATPKAATQAP) and 264–286 (APSA…DAPA). Over residues 287-298 (SAPPEPAEPSPP) the composition is skewed to pro residues. Acidic residues predominate over residues 333–379 (PEPEPEPEAETEVTPEAEAEPEAEPEAEAEPEAEAEAEAEAEAEPEA). Low complexity predominate over residues 380–403 (EAPAPESVAPALQEAEAATAAEAP). The FtsK domain maps to 605–814 (GNPVVTDLAR…FQVSSKIDSR (210 aa)). 625-630 (GSGKSV) is a binding site for ATP.

The protein belongs to the FtsK/SpoIIIE/SftA family. Homohexamer. Forms a ring that surrounds DNA.

It is found in the cell inner membrane. Essential cell division protein that coordinates cell division and chromosome segregation. The N-terminus is involved in assembly of the cell-division machinery. The C-terminus functions as a DNA motor that moves dsDNA in an ATP-dependent manner towards the dif recombination site, which is located within the replication terminus region. Translocation stops specifically at Xer-dif sites, where FtsK interacts with the Xer recombinase, allowing activation of chromosome unlinking by recombination. FtsK orienting polar sequences (KOPS) guide the direction of DNA translocation. FtsK can remove proteins from DNA as it translocates, but translocation stops specifically at XerCD-dif site, thereby preventing removal of XerC and XerD from dif. This Ralstonia nicotianae (strain ATCC BAA-1114 / GMI1000) (Ralstonia solanacearum) protein is DNA translocase FtsK 1 (ftsK1).